The primary structure comprises 241 residues: Viral CASP8 and FADD-like apoptosis regulator (241 aa).

2 consecutive DED domains span residues 8–78 and 95–175; these read PSLP…SRFG and RYRK…QLVE. The segment at 212–241 is disordered; sequence CMPVQESSDSPELLRTPVQESSSDSPEQTT. Residues 229–241 show a composition bias toward polar residues; it reads VQESSSDSPEQTT.

In terms of assembly, associates with the death-inducing signaling complex (DISC) formed by TNFRSF6/FAS, FADD and CASP8. Interacts with FADD. Interacts with host TRAF2. Interacts with host NEMO/IKBKG (via N-terminus). Interacts with host SH3BP4; this interaction plays an important in the suppression of host autophagy.

It localises to the host cytoplasm. It is found in the host nucleus. Its function is as follows. Inhibits TNFRSF1A, TNFRSF6/FAS and TNFRSF12 induced apoptosis. Directs the degradation of host NFKBIB but not NFKBIA. Also suppresses host NF-kappa-B activation by interacting with and preventing ubiquitination of host NEMO/IKBKG, the NF-kappa-B essential modulator subunit of the IKK complex. Interferes with host CASP8/caspase-8 recruitment and activation at the death-inducing signaling complex (DISC). May lead to higher virus production and contribute to virus persistence and oncogenicity. Also participates in the inhibition of host autophagy by interacting with host SH3BP4. The sequence is that of Viral CASP8 and FADD-like apoptosis regulator from Homo sapiens (Human).